The sequence spans 301 residues: tRNA uridine(34) hydroxylase (301 aa).

Residues 120–214 enclose the Rhodanese domain; it reads SAPDVAVIDT…YLEDVPEDQS (95 aa). Cys174 functions as the Cysteine persulfide intermediate in the catalytic mechanism.

The protein belongs to the TrhO family.

It carries out the reaction uridine(34) in tRNA + AH2 + O2 = 5-hydroxyuridine(34) in tRNA + A + H2O. Catalyzes oxygen-dependent 5-hydroxyuridine (ho5U) modification at position 34 in tRNAs. The protein is tRNA uridine(34) hydroxylase of Jannaschia sp. (strain CCS1).